Here is a 205-residue protein sequence, read N- to C-terminus: GTP cyclohydrolase-2 (205 aa).

49–53 (RIHSE) contacts GTP. Residues Cys54, Cys65, and Cys67 each contribute to the Zn(2+) site. GTP contacts are provided by residues Gln70, 92–94 (EGR), and Thr114. The active-site Proton acceptor is the Asp126. Residue Arg128 is the Nucleophile of the active site. Positions 149 and 154 each coordinate GTP.

This sequence belongs to the GTP cyclohydrolase II family. Zn(2+) is required as a cofactor.

It carries out the reaction GTP + 4 H2O = 2,5-diamino-6-hydroxy-4-(5-phosphoribosylamino)-pyrimidine + formate + 2 phosphate + 3 H(+). It functions in the pathway cofactor biosynthesis; riboflavin biosynthesis; 5-amino-6-(D-ribitylamino)uracil from GTP: step 1/4. Its function is as follows. Catalyzes the conversion of GTP to 2,5-diamino-6-ribosylamino-4(3H)-pyrimidinone 5'-phosphate (DARP), formate and pyrophosphate. The polypeptide is GTP cyclohydrolase-2 (Shewanella loihica (strain ATCC BAA-1088 / PV-4)).